Reading from the N-terminus, the 610-residue chain is Dihydroxy-acid dehydratase (610 aa).

D81 contributes to the Mg(2+) binding site. A [2Fe-2S] cluster-binding site is contributed by C122. The Mg(2+) site is built by D123 and K124. Residue K124 is modified to N6-carboxylysine. Residue C193 coordinates [2Fe-2S] cluster. E489 contributes to the Mg(2+) binding site. S515 serves as the catalytic Proton acceptor.

It belongs to the IlvD/Edd family. As to quaternary structure, homodimer. Requires [2Fe-2S] cluster as cofactor. Mg(2+) serves as cofactor.

The enzyme catalyses (2R)-2,3-dihydroxy-3-methylbutanoate = 3-methyl-2-oxobutanoate + H2O. The catalysed reaction is (2R,3R)-2,3-dihydroxy-3-methylpentanoate = (S)-3-methyl-2-oxopentanoate + H2O. The protein operates within amino-acid biosynthesis; L-isoleucine biosynthesis; L-isoleucine from 2-oxobutanoate: step 3/4. It functions in the pathway amino-acid biosynthesis; L-valine biosynthesis; L-valine from pyruvate: step 3/4. In terms of biological role, functions in the biosynthesis of branched-chain amino acids. Catalyzes the dehydration of (2R,3R)-2,3-dihydroxy-3-methylpentanoate (2,3-dihydroxy-3-methylvalerate) into 2-oxo-3-methylpentanoate (2-oxo-3-methylvalerate) and of (2R)-2,3-dihydroxy-3-methylbutanoate (2,3-dihydroxyisovalerate) into 2-oxo-3-methylbutanoate (2-oxoisovalerate), the penultimate precursor to L-isoleucine and L-valine, respectively. This is Dihydroxy-acid dehydratase from Xylella fastidiosa (strain M12).